We begin with the raw amino-acid sequence, 572 residues long: MESLCGVLVFLLLAAGLPLQAAKRFRDVLGHEQYPDHMRENNQLRGWSSDENEWDEQLYPVWRRGEGRWKDSWEGGRVQAALTSDSPALVGSNITFVVNLVFPRCQKEDANGNIVYERNCRSDLELASDPYVYNWTTGADDEDWEDSTSQGQHLRFPDGKPFPRPHGRKKWNFVYVFHTLGQYFQKLGRCSARVSINTVNLTVGPQVMEVIVFRRHGRAYIPISKVKDVYVITDQIPIFVTMYQKNDRNSSDETFLRDLPIFFDVLIHDPSHFLNYSAISYKWNFGDNTGLFVSNNHTLNHTYVLNGTFNFNLTVQTAVPGPCPSPTPSPSSSTSPSPASSPSPTLSTPSPSLMPTGHKSMELSDISNENCRINRYGYFRATITIVDGILEVNIIQVADVPIPTPQPDNSLMDFIVTCKGATPTEACTIISDPTCQIAQNRVCSPVAVDELCLLSVRRAFNGSGTYCVNFTLGDDASLALTSALISIPGKDLGSPLRTVNGVLISIGCLAMFVTMVTILLYKKHKTYKPIGNCTRNVVKGKGLSVFLSHAKAPFSRGDREKDPLLQDKPWML.

The N-terminal stretch at 1 to 22 (MESLCGVLVFLLLAAGLPLQAA) is a signal peptide. The Extracellular portion of the chain corresponds to 23–500 (KRFRDVLGHE…DLGSPLRTVN (478 aa)). N-linked (GlcNAc...) asparagine glycans are attached at residues Asn93, Asn134, Asn200, Asn249, Asn275, Asn296, Asn300, Asn306, and Asn312. One can recognise a PKD domain in the interval 251–338 (SDETFLRDLP…SPSSSTSPSP (88 aa)). The tract at residues 321-359 (GPCPSPTPSPSSSTSPSPASSPSPTLSTPSPSLMPTGHK) is disordered. A compositionally biased stretch (low complexity) spans 330 to 356 (PSSSTSPSPASSPSPTLSTPSPSLMPT). N-linked (GlcNAc...) asparagine glycans are attached at residues Asn461 and Asn469. Residues 501 to 521 (GVLISIGCLAMFVTMVTILLY) form a helical membrane-spanning segment. The Cytoplasmic portion of the chain corresponds to 522-572 (KKHKTYKPIGNCTRNVVKGKGLSVFLSHAKAPFSRGDREKDPLLQDKPWML). Position 544 is a phosphoserine (Ser544). Positions 556–558 (RGD) match the Cell attachment site motif.

It belongs to the PMEL/NMB family.

It localises to the cell membrane. It is found in the melanosome membrane. The protein localises to the early endosome membrane. Functionally, could be a melanogenic enzyme. The protein is Transmembrane glycoprotein NMB (Gpnmb) of Rattus norvegicus (Rat).